The following is a 222-amino-acid chain: Thiamine-phosphate synthase (222 aa).

Residues 40-44 (QLRDK) and Asn-81 contribute to the 4-amino-2-methyl-5-(diphosphooxymethyl)pyrimidine site. Positions 82 and 101 each coordinate Mg(2+). Position 120 (Ser-120) interacts with 4-amino-2-methyl-5-(diphosphooxymethyl)pyrimidine. 146–148 (TPT) contributes to the 2-[(2R,5Z)-2-carboxy-4-methylthiazol-5(2H)-ylidene]ethyl phosphate binding site. Residue Lys-149 participates in 4-amino-2-methyl-5-(diphosphooxymethyl)pyrimidine binding. Gly-178 provides a ligand contact to 2-[(2R,5Z)-2-carboxy-4-methylthiazol-5(2H)-ylidene]ethyl phosphate.

Belongs to the thiamine-phosphate synthase family. Mg(2+) serves as cofactor.

It carries out the reaction 2-[(2R,5Z)-2-carboxy-4-methylthiazol-5(2H)-ylidene]ethyl phosphate + 4-amino-2-methyl-5-(diphosphooxymethyl)pyrimidine + 2 H(+) = thiamine phosphate + CO2 + diphosphate. The catalysed reaction is 2-(2-carboxy-4-methylthiazol-5-yl)ethyl phosphate + 4-amino-2-methyl-5-(diphosphooxymethyl)pyrimidine + 2 H(+) = thiamine phosphate + CO2 + diphosphate. The enzyme catalyses 4-methyl-5-(2-phosphooxyethyl)-thiazole + 4-amino-2-methyl-5-(diphosphooxymethyl)pyrimidine + H(+) = thiamine phosphate + diphosphate. Its pathway is cofactor biosynthesis; thiamine diphosphate biosynthesis; thiamine phosphate from 4-amino-2-methyl-5-diphosphomethylpyrimidine and 4-methyl-5-(2-phosphoethyl)-thiazole: step 1/1. Condenses 4-methyl-5-(beta-hydroxyethyl)thiazole monophosphate (THZ-P) and 2-methyl-4-amino-5-hydroxymethyl pyrimidine pyrophosphate (HMP-PP) to form thiamine monophosphate (TMP). The sequence is that of Thiamine-phosphate synthase from Mycobacterium tuberculosis (strain ATCC 25177 / H37Ra).